The chain runs to 406 residues: 8-amino-7-oxononanoate synthase (406 aa).

R21 is a binding site for substrate. Pyridoxal 5'-phosphate is bound at residue 112–113 (GY). Position 137 (H137) interacts with substrate. Pyridoxal 5'-phosphate is bound by residues S183, H211, and T239. Position 242 is an N6-(pyridoxal phosphate)lysine (K242). T358 is a binding site for substrate.

Belongs to the class-II pyridoxal-phosphate-dependent aminotransferase family. BioF subfamily. Homodimer. It depends on pyridoxal 5'-phosphate as a cofactor.

It catalyses the reaction 6-carboxyhexanoyl-[ACP] + L-alanine + H(+) = (8S)-8-amino-7-oxononanoate + holo-[ACP] + CO2. It functions in the pathway cofactor biosynthesis; biotin biosynthesis. Catalyzes the decarboxylative condensation of pimeloyl-[acyl-carrier protein] and L-alanine to produce 8-amino-7-oxononanoate (AON), [acyl-carrier protein], and carbon dioxide. This chain is 8-amino-7-oxononanoate synthase, found in Burkholderia orbicola (strain MC0-3).